Here is a 464-residue protein sequence, read N- to C-terminus: GTPase Der (464 aa).

2 consecutive EngA-type G domains span residues 5–169 and 190–368; these read PTIA…KQKG and IKVA…RESH. GTP is bound by residues 11-18, 58-62, 121-124, 196-203, 243-247, and 308-311; these read GRPNVGKS, DTGGI, NKAD, GRPNAGKS, DTAGM, and NKFD. In terms of domain architecture, KH-like spans 369–461; the sequence is NLPTTGQLNR…PVIFSARSRV (93 aa).

This sequence belongs to the TRAFAC class TrmE-Era-EngA-EngB-Septin-like GTPase superfamily. EngA (Der) GTPase family. In terms of assembly, associates with the 50S ribosomal subunit.

Functionally, GTPase that plays an essential role in the late steps of ribosome biogenesis. The polypeptide is GTPase Der (Akkermansia muciniphila (strain ATCC BAA-835 / DSM 22959 / JCM 33894 / BCRC 81048 / CCUG 64013 / CIP 107961 / Muc)).